We begin with the raw amino-acid sequence, 502 residues long: Lysine--tRNA ligase (502 aa).

Mg(2+) contacts are provided by E411 and E418.

This sequence belongs to the class-II aminoacyl-tRNA synthetase family. Homodimer. Mg(2+) serves as cofactor.

It is found in the cytoplasm. The catalysed reaction is tRNA(Lys) + L-lysine + ATP = L-lysyl-tRNA(Lys) + AMP + diphosphate. The sequence is that of Lysine--tRNA ligase from Chromohalobacter salexigens (strain ATCC BAA-138 / DSM 3043 / CIP 106854 / NCIMB 13768 / 1H11).